Reading from the N-terminus, the 122-residue chain is MTKLSRKLQTQKRHRRLRRFLIGDATRPRLSVFRSNNHIYAQVIDDSAQTTICSASTVDKELREKSEKLPSDCNSSSIVGKLLAKRAIKKGVKQVIFDRGGNIYHGRVKALADAAREAGLEF.

The protein belongs to the universal ribosomal protein uL18 family. In terms of assembly, part of the 50S ribosomal subunit; part of the 5S rRNA/L5/L18/L25 subcomplex. Contacts the 5S and 23S rRNAs.

Functionally, this is one of the proteins that bind and probably mediate the attachment of the 5S RNA into the large ribosomal subunit, where it forms part of the central protuberance. This chain is Large ribosomal subunit protein uL18, found in Prochlorococcus marinus (strain MIT 9215).